The primary structure comprises 305 residues: MLLHIALILGCWSVFSEGAETDVAERADGRRPIWNMGHMVNGIWQIDQFVDLGVNSIEFDINFDKNGKPVYTYHGVPCDCFRSCLNWEYFGEFLTALRHRTTPGDKLYKEKLILFVFDMKTNSLYDNQAYQAGVNMATDIFKYYWNNGQNGGRAYFILSIPNLNHYDLIKGFRETITKKGHPELMEKVGYDFSANDNIPDVEKAYGKVGVTDHVWQSDGITNCIARGLSRVKEAVKERDSGGVINKVYIWTIDKFSSTRDALDAGVDGIMTNYPYVLNDVLKEGAYKNKFRMATYEDNPWVTFKA.

The signal sequence occupies residues 1-18 (MLLHIALILGCWSVFSEG). A propeptide spanning residues 19 to 26 (AETDVAER) is cleaved from the precursor. His38 is an active-site residue. The Mg(2+) site is built by Glu58 and Asp60. His74 (nucleophile) is an active-site residue. Cystine bridges form between Cys78-Cys84 and Cys80-Cys223. Residue Asp118 participates in Mg(2+) binding.

This sequence belongs to the arthropod phospholipase D family. Class II subfamily. Class IIa sub-subfamily. Mg(2+) serves as cofactor. Expressed by the venom gland.

It localises to the secreted. The catalysed reaction is an N-(acyl)-sphingosylphosphocholine = an N-(acyl)-sphingosyl-1,3-cyclic phosphate + choline. It carries out the reaction an N-(acyl)-sphingosylphosphoethanolamine = an N-(acyl)-sphingosyl-1,3-cyclic phosphate + ethanolamine. It catalyses the reaction a 1-acyl-sn-glycero-3-phosphocholine = a 1-acyl-sn-glycero-2,3-cyclic phosphate + choline. The enzyme catalyses a 1-acyl-sn-glycero-3-phosphoethanolamine = a 1-acyl-sn-glycero-2,3-cyclic phosphate + ethanolamine. In terms of biological role, dermonecrotic toxins cleave the phosphodiester linkage between the phosphate and headgroup of certain phospholipids (sphingolipid and lysolipid substrates), forming an alcohol (often choline) and a cyclic phosphate. This toxin acts on sphingomyelin (SM) wih high activity. It may also act on ceramide phosphoethanolamine (CPE), lysophosphatidylcholine (LPC) and lysophosphatidylethanolamine (LPE), but not on lysophosphatidylserine (LPS), and lysophosphatidylglycerol (LPG). It acts by transphosphatidylation, releasing exclusively cyclic phosphate products as second products. Shows high hemolytic activity. Causes dermonecrosis, induces inflammatory response, platelet aggregation and increases vessel permeability. Shows no lethality when injected at higher dose into mice. May cause complement-dependent hemolysis as well as in a complement-independent manner. The hemolysis provoked in a complement-independent manner may be composed of several steps. The toxin may bind to erythrocyte membranes, may hydrolyze membrane phospholipids (SM and LPC) thus generating metabolism products that may cause hemolysis, probably by provoking an increase of calcium inside cells. The calcium influx may be due to the opening of L-type calcium channels, since L-type calcium channel blockers inhibit calcium influx. The polypeptide is Dermonecrotic toxin LiSicTox-alphaII1 (Loxosceles intermedia (Brown spider)).